The primary structure comprises 139 residues: UPF0216 protein MJ1224 (139 aa).

The protein belongs to the UPF0216 family.

The polypeptide is UPF0216 protein MJ1224 (Methanocaldococcus jannaschii (strain ATCC 43067 / DSM 2661 / JAL-1 / JCM 10045 / NBRC 100440) (Methanococcus jannaschii)).